A 185-amino-acid polypeptide reads, in one-letter code: Lysozyme g (185 aa).

2 cysteine pairs are disulfide-bonded: C4-C60 and C18-C29. The active site involves E73.

It belongs to the glycosyl hydrolase 23 family.

Its subcellular location is the secreted. The catalysed reaction is Hydrolysis of (1-&gt;4)-beta-linkages between N-acetylmuramic acid and N-acetyl-D-glucosamine residues in a peptidoglycan and between N-acetyl-D-glucosamine residues in chitodextrins.. This Cygnus atratus (Black swan) protein is Lysozyme g.